Here is a 45-residue protein sequence, read N- to C-terminus: Putative metallothionein-like protein 1B (45 aa).

The protein belongs to the metallothionein superfamily. Type 15 family.

Metallothioneins have a high content of cysteine residues that bind various heavy metals. Confers tolerance to cadmium (Cd) and plays a role in Cd and zinc (Zn) homeostasis. This is Putative metallothionein-like protein 1B (MT1B) from Arabidopsis thaliana (Mouse-ear cress).